Reading from the N-terminus, the 238-residue chain is Probable transcriptional regulatory protein SpyM51586 (238 aa).

This sequence belongs to the TACO1 family. YeeN subfamily.

The protein resides in the cytoplasm. This Streptococcus pyogenes serotype M5 (strain Manfredo) protein is Probable transcriptional regulatory protein SpyM51586.